The primary structure comprises 365 residues: Cobalt-precorrin-5B C(1)-methyltransferase (365 aa).

It belongs to the CbiD family.

It carries out the reaction Co-precorrin-5B + S-adenosyl-L-methionine = Co-precorrin-6A + S-adenosyl-L-homocysteine. Its pathway is cofactor biosynthesis; adenosylcobalamin biosynthesis; cob(II)yrinate a,c-diamide from sirohydrochlorin (anaerobic route): step 6/10. Catalyzes the methylation of C-1 in cobalt-precorrin-5B to form cobalt-precorrin-6A. This chain is Cobalt-precorrin-5B C(1)-methyltransferase, found in Clostridium perfringens (strain SM101 / Type A).